Reading from the N-terminus, the 81-residue chain is uncharacterized protein (81 aa).

This is an uncharacterized protein from Sulfolobus islandicus filamentous virus (isolate Iceland/Hveragerdi) (SIFV).